A 558-amino-acid chain; its full sequence is Putative ABC transporter ATP-binding protein SMU_1934c (558 aa).

2 ABC transporter domains span residues 5-246 and 295-527; these read IEFK…GIRE and FDIQ…ANLK. Residues 39–46 and 328–335 each bind ATP; these read GPSGSGKS and GKNGAGKS.

Belongs to the ABC transporter superfamily.

The protein resides in the cell membrane. Functionally, probably part of an ABC transporter complex. Responsible for energy coupling to the transport system. The sequence is that of Putative ABC transporter ATP-binding protein SMU_1934c (sdcBA) from Streptococcus mutans serotype c (strain ATCC 700610 / UA159).